The chain runs to 174 residues: Glyoxylase I 4 (174 aa).

Positions 13-135 (SLNHVSVLCR…DGFMIEICNC (123 aa)) constitute a VOC domain. Catalysis depends on glutamate 131, which acts as the Proton donor/acceptor.

Belongs to the glyoxalase I family. In terms of tissue distribution, mostly expressed in roots, and, to a lower extent, in leaves, flowers, seeds and siliques.

It localises to the cell membrane. The protein localises to the cytoplasm. Functionally, involved in the detoxification and scavenging of methylglyoxal (MG), a cytotoxic aldehyde produced in response to primary metabolism alteration observed during biotic and abiotic stresses. Modulates cross-talk between salicylic acid (SA) and jasmonic acid (JA) signaling pathways during defense responses to pathogens such as Botrytis cinerea. The chain is Glyoxylase I 4 from Arabidopsis thaliana (Mouse-ear cress).